Consider the following 332-residue polypeptide: Probable allantoicase (332 aa).

Belongs to the allantoicase family.

It catalyses the reaction allantoate + H2O = (S)-ureidoglycolate + urea. Its pathway is nitrogen metabolism; (S)-allantoin degradation; (S)-ureidoglycolate from allantoate (aminidohydrolase route): step 1/1. In Pseudomonas paraeruginosa (strain DSM 24068 / PA7) (Pseudomonas aeruginosa (strain PA7)), this protein is Probable allantoicase.